The chain runs to 929 residues: Bifunctional glutamine synthetase adenylyltransferase/adenylyl-removing enzyme (929 aa).

Positions 1 to 423 (MSTPIDSSRA…RHFEQIFAAR (423 aa)) are adenylyl removase. Positions 433–929 (ARIRPEQSGD…FQLWEDIFGT (497 aa)) are adenylyl transferase.

This sequence belongs to the GlnE family. It depends on Mg(2+) as a cofactor.

It carries out the reaction [glutamine synthetase]-O(4)-(5'-adenylyl)-L-tyrosine + phosphate = [glutamine synthetase]-L-tyrosine + ADP. The catalysed reaction is [glutamine synthetase]-L-tyrosine + ATP = [glutamine synthetase]-O(4)-(5'-adenylyl)-L-tyrosine + diphosphate. Involved in the regulation of glutamine synthetase GlnA, a key enzyme in the process to assimilate ammonia. When cellular nitrogen levels are high, the C-terminal adenylyl transferase (AT) inactivates GlnA by covalent transfer of an adenylyl group from ATP to specific tyrosine residue of GlnA, thus reducing its activity. Conversely, when nitrogen levels are low, the N-terminal adenylyl removase (AR) activates GlnA by removing the adenylyl group by phosphorolysis, increasing its activity. The regulatory region of GlnE binds the signal transduction protein PII (GlnB) which indicates the nitrogen status of the cell. This is Bifunctional glutamine synthetase adenylyltransferase/adenylyl-removing enzyme from Nitrosomonas europaea (strain ATCC 19718 / CIP 103999 / KCTC 2705 / NBRC 14298).